The sequence spans 728 residues: MRLTFIPSLIGVANAVCPYMTGELNRRDEISDGDAAAATEEFLSQYYLNDNDAFMTSDVGGPIEDQNSLSAGERGPTLLEDFIFRQKIQRFDHERVPERAVHARGAGAHGVFTSYGDFSNITAASFLAKEGKQTPVFVRFSTVAGSRGSSDLARDVHGFATRFYTDEGNFDIVGNNIPVFFIQDAILFPDLIHAVKPRGDNEIPQAATAHDSAWDFFSQQPSTMHTLLWAMSGHGIPRSFRHVDGFGVHTFRFVTDDGASKLVKFHWKSLQGKASMVWEEAQQTSGKNPDFMRQDLHDAIEAGRYPEWELGVQIMDEEDQLRFGFDLLDPTKIVPEEFVPITKLGKMQLNRNPRNYFAETEQVMFQPGHIVRGVDFTEDPLLQGRLFSYLDTQLNRHGGPNFEQLPINQPRVPVHNNNRDGAGQMFIPLNPHAYSPKTSVNGSPKQANQTVGDGFFTAPGRTTSGKLVRAVSSSFEDVWSQPRLFYNSLVPAEKQFVIDAIRFENANVKSPVVKNNVIIQLNRIDNDLARRVARAIGVAEPEPDPTFYHNNKTADVGTFGTKLKKLDGLKVGVLGSVQHPGSVEGASTLRDRLKDDGVDVVLVAERLADGVDQTYSTSDAIQFDAVVVAAGAESLFAASSFTGGSANSASGASSLYPTGRPLQILIDGFRFGKTVGALGSGTAALRNAGIATSRDGVYVAQSVTDDFANDLKEGLRTFKFLDRFPVDH.

The signal sequence occupies residues 1–15 (MRLTFIPSLIGVANA). A propeptide spanning residues 16-27 (VCPYMTGELNRR) is cleaved from the precursor. Histidine 102 is a catalytic residue. A glycan (N-linked (GlcNAc...) asparagine) is linked at asparagine 120. Asparagine 175 is a catalytic residue. Tyrosine 389 lines the heme pocket. Asparagine 448 and asparagine 551 each carry an N-linked (GlcNAc...) asparagine glycan.

Belongs to the catalase family. Homotetramer. Requires heme as cofactor. N-glycosylated.

The protein resides in the secreted. It carries out the reaction 2 H2O2 = O2 + 2 H2O. In terms of biological role, occurs in almost all aerobically respiring organisms and serves to protect cells from the toxic effects of hydrogen peroxide. The chain is Catalase B (catB) from Aspergillus fumigatus (strain ATCC MYA-4609 / CBS 101355 / FGSC A1100 / Af293) (Neosartorya fumigata).